A 424-amino-acid chain; its full sequence is Ancylostoma secreted protein (424 aa).

The N-terminal stretch at 1 to 18 (MFSPVIVSVIFTIAFCDA) is a signal peptide. SCP domains follow at residues 41-177 (LDFH…SCIY) and 242-387 (LSVH…VCQY).

The protein belongs to the CRISP family.

It is found in the secreted. Its function is as follows. Associated with the transition to parasitism by infective hookworm larvae. The polypeptide is Ancylostoma secreted protein (ASP) (Ancylostoma caninum (Dog hookworm)).